A 573-amino-acid chain; its full sequence is Sulfite reductase [NADPH] hemoprotein beta-component (573 aa).

[4Fe-4S] cluster is bound by residues C438, C444, C483, and C487. Residue C487 coordinates siroheme.

Belongs to the nitrite and sulfite reductase 4Fe-4S domain family. In terms of assembly, alpha(8)-beta(8). The alpha component is a flavoprotein, the beta component is a hemoprotein. It depends on siroheme as a cofactor. [4Fe-4S] cluster is required as a cofactor.

It catalyses the reaction hydrogen sulfide + 3 NADP(+) + 3 H2O = sulfite + 3 NADPH + 4 H(+). The protein operates within sulfur metabolism; hydrogen sulfide biosynthesis; hydrogen sulfide from sulfite (NADPH route): step 1/1. Its function is as follows. Component of the sulfite reductase complex that catalyzes the 6-electron reduction of sulfite to sulfide. This is one of several activities required for the biosynthesis of L-cysteine from sulfate. The chain is Sulfite reductase [NADPH] hemoprotein beta-component from Geobacillus thermodenitrificans (strain NG80-2).